The chain runs to 171 residues: Dual specificity protein phosphatase OPG106 (171 aa).

Residues 1 to 27 form a dimerization region; it reads MDKKSLYKYLLLRSTGDMHKAKSPTIM. Residues 23–171 form the Tyrosine-protein phosphatase domain; sequence SPTIMTRVTN…IIEKYVIDKN (149 aa). The active-site Phosphocysteine intermediate is C110.

Belongs to the protein-tyrosine phosphatase family. Non-receptor class dual specificity subfamily. In terms of assembly, homodimer.

It localises to the virion. It is found in the host cytoplasm. The enzyme catalyses O-phospho-L-tyrosyl-[protein] + H2O = L-tyrosyl-[protein] + phosphate. The catalysed reaction is O-phospho-L-seryl-[protein] + H2O = L-seryl-[protein] + phosphate. In terms of biological role, serine/tyrosine phosphatase which down-regulates cellular antiviral response by dephosphorylating activated host STAT1 and blocking interferon (IFN)-stimulated innate immune responses. Dephosphorylates the OPG144 protein. This Bos taurus (Bovine) protein is Dual specificity protein phosphatase OPG106 (OPG106).